Here is a 497-residue protein sequence, read N- to C-terminus: tRNA-2-methylthio-N(6)-dimethylallyladenosine synthase (497 aa).

The MTTase N-terminal domain occupies Arg4–His120. 6 residues coordinate [4Fe-4S] cluster: Cys13, Cys49, Cys83, Cys157, Cys161, and Cys164. The region spanning Arg143–Gln374 is the Radical SAM core domain. The region spanning Arg376 to Leu445 is the TRAM domain.

Belongs to the methylthiotransferase family. MiaB subfamily. In terms of assembly, monomer. [4Fe-4S] cluster is required as a cofactor.

It localises to the cytoplasm. The catalysed reaction is N(6)-dimethylallyladenosine(37) in tRNA + (sulfur carrier)-SH + AH2 + 2 S-adenosyl-L-methionine = 2-methylsulfanyl-N(6)-dimethylallyladenosine(37) in tRNA + (sulfur carrier)-H + 5'-deoxyadenosine + L-methionine + A + S-adenosyl-L-homocysteine + 2 H(+). Its function is as follows. Catalyzes the methylthiolation of N6-(dimethylallyl)adenosine (i(6)A), leading to the formation of 2-methylthio-N6-(dimethylallyl)adenosine (ms(2)i(6)A) at position 37 in tRNAs that read codons beginning with uridine. This Frankia alni (strain DSM 45986 / CECT 9034 / ACN14a) protein is tRNA-2-methylthio-N(6)-dimethylallyladenosine synthase.